We begin with the raw amino-acid sequence, 320 residues long: Ribosomal protein L11 methyltransferase (320 aa).

Residues Thr165, Gly186, Asp208, and Asn251 each coordinate S-adenosyl-L-methionine.

The protein belongs to the methyltransferase superfamily. PrmA family.

It localises to the cytoplasm. The enzyme catalyses L-lysyl-[protein] + 3 S-adenosyl-L-methionine = N(6),N(6),N(6)-trimethyl-L-lysyl-[protein] + 3 S-adenosyl-L-homocysteine + 3 H(+). Functionally, methylates ribosomal protein L11. The chain is Ribosomal protein L11 methyltransferase from Limosilactobacillus fermentum (strain NBRC 3956 / LMG 18251) (Lactobacillus fermentum).